Reading from the N-terminus, the 436-residue chain is MTKALYDRDGAAIGNLQKLRFFPLAISGGRGARLIEENGRELIDLSGAWGAASLGYGHPAIVAAVSAAAANPAGATILSASNAPAVTLAERLLASFPGEGTHKIWFGHSGSDANEAAYRAIVKATGRSGVIAFAGAYHGCTVGSMAFSGHSVQADAAKADGLILLPYPDPYRPYRNDPTGDAILTLLTEKLAAVPAGSIGAAFIEPIQSDGGLIVPPDGFLRKFADICRAHGILVVCDEVKVGLARSGRLHCFEHEGFVPDILVLGKGLGGGLPLSAVIAPAEILDCASAFAMQTLHGNPISAAAGLAVLETIDRDDLPAMAERKGRLLRDGLSELAKRHPLIGDIRGRGLACGMELVCDRQSREPARAETAKLIYRAYQLGLVVYYVGMNGNVLEFTPPLTITETDIHKALDLLDRAFSELSAVSNEEIAQFAGW.

Residues 110–111 (GS), Y137, and 238–241 (DEVK) contribute to the pyridoxal 5'-phosphate site. Y137 is a catalytic residue. K267 carries the N6-(pyridoxal phosphate)lysine modification. A pyridoxal 5'-phosphate-binding site is contributed by T295.

The protein belongs to the class-III pyridoxal-phosphate-dependent aminotransferase family. As to quaternary structure, monomer. Requires pyridoxal 5'-phosphate as cofactor.

The enzyme catalyses L-2-aminohexano-6-lactam = D-2-aminohexano-6-lactam. Catalyzes the interconversion of L-alpha-amino-epsilon-caprolactam and D-alpha-amino-epsilon-caprolactam. The chain is 2-aminohexano-6-lactam racemase from Achromobacter obae.